The following is a 364-amino-acid chain: Methylthioribose-1-phosphate isomerase (364 aa).

D246 functions as the Proton donor in the catalytic mechanism.

The protein belongs to the eIF-2B alpha/beta/delta subunits family. MtnA subfamily.

It is found in the cytoplasm. Its subcellular location is the nucleus. The enzyme catalyses 5-(methylsulfanyl)-alpha-D-ribose 1-phosphate = 5-(methylsulfanyl)-D-ribulose 1-phosphate. The protein operates within amino-acid biosynthesis; L-methionine biosynthesis via salvage pathway; L-methionine from S-methyl-5-thio-alpha-D-ribose 1-phosphate: step 1/6. Its function is as follows. Catalyzes the interconversion of methylthioribose-1-phosphate (MTR-1-P) into methylthioribulose-1-phosphate (MTRu-1-P). The chain is Methylthioribose-1-phosphate isomerase from Bombyx mori (Silk moth).